The sequence spans 115 residues: Beta-2-microglobulin (115 aa).

Residues 1 to 18 form the signal peptide; that stretch reads MGLLICSLLLGLLCCSMA. Residues 23-114 enclose the Ig-like C1-type domain; sequence PKVEVYTREP…KSKDHFLMIG (92 aa).

Belongs to the beta-2-microglobulin family. Heterodimer of an alpha chain and a beta chain. Beta-2-microglobulin is the beta-chain of major histocompatibility complex class I molecules.

It localises to the secreted. Functionally, component of the class I major histocompatibility complex (MHC). Involved in the presentation of peptide antigens to the immune system. The sequence is that of Beta-2-microglobulin (b2m) from Paralichthys olivaceus (Bastard halibut).